Consider the following 542-residue polypeptide: 2,3-bisphosphoglycerate-independent phosphoglycerate mutase (542 aa).

Positions 24 and 74 each coordinate Mn(2+). Serine 74 acts as the Phosphoserine intermediate in catalysis. Residues histidine 135, 165-166 (RD), arginine 197, arginine 203, 268-271 (RPDR), and lysine 341 contribute to the substrate site. Mn(2+) is bound by residues aspartate 408, histidine 412, aspartate 449, histidine 450, and histidine 467.

The protein belongs to the BPG-independent phosphoglycerate mutase family. In terms of assembly, monomer. Mn(2+) is required as a cofactor.

The enzyme catalyses (2R)-2-phosphoglycerate = (2R)-3-phosphoglycerate. Its pathway is carbohydrate degradation; glycolysis; pyruvate from D-glyceraldehyde 3-phosphate: step 3/5. Its function is as follows. Catalyzes the interconversion of 2-phosphoglycerate and 3-phosphoglycerate. The chain is 2,3-bisphosphoglycerate-independent phosphoglycerate mutase from Prochlorococcus marinus (strain NATL1A).